We begin with the raw amino-acid sequence, 353 residues long: DNA-repair protein XRCC1 (353 aa).

Residues 1–12 are compositionally biased toward polar residues; that stretch reads MSQKRNLPSWMS. Positions 1 to 57 are disordered; sequence MSQKRNLPSWMSSRDPEITPSKSHCKKPKDEGPTEEHNSRNAPSNKSEHAEPSSNTT. The segment covering 28–39 has biased composition (basic and acidic residues); that stretch reads PKDEGPTEEHNS. A BRCT 1 domain is found at 58 to 146; that stretch reads EFSKLMEGVV…KLVDIEQYLM (89 aa). The segment at 150–194 is disordered; the sequence is KPWRKSSSPQDANREKREHLSKKPEKQVEKKTETRGTPSTSSKNR. The segment covering 161 to 183 has biased composition (basic and acidic residues); it reads ANREKREHLSKKPEKQVEKKTET. Over residues 184–194 the composition is skewed to polar residues; sequence RGTPSTSSKNR. Residues 240 to 260 adopt a coiled-coil conformation; that stretch reads AAEGVLTCLQDAIDSLEQKQD. The 82-residue stretch at 266-347 folds into the BRCT 2 domain; sequence ELWSFVPRVV…EEEIELAYRN (82 aa).

In terms of assembly, homodimer. Interacts with polynucleotide kinase (PNK), DNA polymerase-beta (POLB) and DNA ligase III (LIG3). Interacts with ZDP and ROS1. Binds to various forms of double-stranded DNA (e.g. methylated, unmethylated, with single-nucleotide gap flanked by 3'-phosphate or 5'-phosphate ends).

The protein localises to the nucleus. Functionally, corrects defective DNA strand-break repair and sister chromatid exchange following treatment with ionizing radiation and alkylating agents. Involved in DNA demethylation pathway by stimulating cytosine methylation (5-meC) excision, gap tailoring, and DNA ligation. This is DNA-repair protein XRCC1 from Arabidopsis thaliana (Mouse-ear cress).